A 350-amino-acid polypeptide reads, in one-letter code: tRNA uridine(34) hydroxylase (350 aa).

Positions 146-240 (DDPDAVFIDM…YARRAREQGL (95 aa)) constitute a Rhodanese domain. C200 serves as the catalytic Cysteine persulfide intermediate. A compositionally biased stretch (basic and acidic residues) spans 319–328 (RRRRAGRENG). The tract at residues 319 to 350 (RRRRAGRENGNKIFNKSRGRLNSKLSIPDPAE) is disordered.

Belongs to the TrhO family.

It carries out the reaction uridine(34) in tRNA + AH2 + O2 = 5-hydroxyuridine(34) in tRNA + A + H2O. Catalyzes oxygen-dependent 5-hydroxyuridine (ho5U) modification at position 34 in tRNAs. The protein is tRNA uridine(34) hydroxylase of Salmonella agona (strain SL483).